The sequence spans 391 residues: Phosphoglycerate kinase (391 aa).

Substrate is bound by residues aspartate 21–asparagine 23, arginine 36, histidine 59–arginine 62, arginine 113, and arginine 146. ATP-binding positions include lysine 197, glutamate 319, and glycine 345–threonine 348.

Belongs to the phosphoglycerate kinase family. In terms of assembly, monomer.

It is found in the cytoplasm. The catalysed reaction is (2R)-3-phosphoglycerate + ATP = (2R)-3-phospho-glyceroyl phosphate + ADP. Its pathway is carbohydrate degradation; glycolysis; pyruvate from D-glyceraldehyde 3-phosphate: step 2/5. The chain is Phosphoglycerate kinase from Shewanella baltica (strain OS155 / ATCC BAA-1091).